The sequence spans 1594 residues: NAD-specific glutamate dehydrogenase (1594 aa).

K816 is a catalytic residue.

It belongs to the Glu/Leu/Phe/Val dehydrogenases family. Interacts with (unphosphorylated) GarA.

It catalyses the reaction L-glutamate + NAD(+) + H2O = 2-oxoglutarate + NH4(+) + NADH + H(+). Its activity is regulated as follows. Activity is inhibited by unphosphorylated GarA. Stimulated by manganese and magnesium. Its function is as follows. Catalyzes the reversible conversion of L-glutamate to 2-oxoglutarate. Highly specific for NAD. This is NAD-specific glutamate dehydrogenase (gdh) from Mycolicibacterium smegmatis (strain ATCC 700084 / mc(2)155) (Mycobacterium smegmatis).